Consider the following 187-residue polypeptide: MVAATVAAAWLLLWAAACAQQEQDFYDFKAVNIRGKLVSLEKYRGSVSLVVNVASECGFTDQHYRALQQLQRDLGPHHFNVLAFPCNQFGQQEPDSNKEIESFARRTYSVSFPMFSKIAVTGTGAHPAFKYLAQTSGKEPTWNFWKYLVAPDGKVVGAWDPTVSVEEVRPQITALVRKLILLKREDL.

The N-terminal stretch at 1–19 (MVAATVAAAWLLLWAAACA) is a signal peptide. Residue Cys-57 is part of the active site.

This sequence belongs to the glutathione peroxidase family. Expressed in esophageal epithelial cells; expression is up-regulated after exposure to acidic bile acids.

The protein localises to the secreted. It carries out the reaction 2 glutathione + H2O2 = glutathione disulfide + 2 H2O. Its function is as follows. It protects esophageal epithelia from hydrogen peroxide-induced oxidative stress. It suppresses acidic bile acid-induced reactive oxygen species (ROS) and protects against oxidative DNA damage and double-strand breaks. In Homo sapiens (Human), this protein is Glutathione peroxidase 7 (GPX7).